A 247-amino-acid chain; its full sequence is MSKETDRIFAQPLAQVPDFAFNEDVVRVFPDMIKRSVPGYPTIVENLGVLAAQFAQPDTVLYDLGSSLGAVTQALRRHVRSEGCEVIAIDNSSAMVERCREYLNAQNSMFQELLPVQVIEGDILALEFKPASVVALNFTLQFIAPEQRLILLGRIRDALVPGGALILSEKLRFDDEQEHALLTDLHIAFKRANGYSDLEIAQKRSAIENVMKPDSLEEHRQRLLAAGFSKVVPWFQCLNFTSLIALP.

Residues Y40, 65–67, 90–91, 122–123, N137, and R204 contribute to the S-adenosyl-L-methionine site; these read GSS, DN, and DI.

The protein belongs to the class I-like SAM-binding methyltransferase superfamily. Cx-SAM synthase family. As to quaternary structure, homodimer.

The catalysed reaction is prephenate + S-adenosyl-L-methionine = carboxy-S-adenosyl-L-methionine + 3-phenylpyruvate + H2O. Catalyzes the conversion of S-adenosyl-L-methionine (SAM) to carboxy-S-adenosyl-L-methionine (Cx-SAM). The sequence is that of Carboxy-S-adenosyl-L-methionine synthase from Pseudomonas savastanoi pv. phaseolicola (strain 1448A / Race 6) (Pseudomonas syringae pv. phaseolicola (strain 1448A / Race 6)).